Reading from the N-terminus, the 446-residue chain is tRNA-2-methylthio-N(6)-dimethylallyladenosine synthase (446 aa).

The MTTase N-terminal domain maps to 3-120 (KKIYIKTFGC…LPEMLKQRRS (118 aa)). Residues Cys12, Cys49, Cys83, Cys157, Cys161, and Cys164 each coordinate [4Fe-4S] cluster. A Radical SAM core domain is found at 143-375 (KVEGATAFVS…QAVIDQNTRR (233 aa)). Positions 378–444 (DEMVGSVQRI…AYTLRGEIVV (67 aa)) constitute a TRAM domain.

This sequence belongs to the methylthiotransferase family. MiaB subfamily. In terms of assembly, monomer. The cofactor is [4Fe-4S] cluster.

It is found in the cytoplasm. The catalysed reaction is N(6)-dimethylallyladenosine(37) in tRNA + (sulfur carrier)-SH + AH2 + 2 S-adenosyl-L-methionine = 2-methylsulfanyl-N(6)-dimethylallyladenosine(37) in tRNA + (sulfur carrier)-H + 5'-deoxyadenosine + L-methionine + A + S-adenosyl-L-homocysteine + 2 H(+). Catalyzes the methylthiolation of N6-(dimethylallyl)adenosine (i(6)A), leading to the formation of 2-methylthio-N6-(dimethylallyl)adenosine (ms(2)i(6)A) at position 37 in tRNAs that read codons beginning with uridine. The sequence is that of tRNA-2-methylthio-N(6)-dimethylallyladenosine synthase from Herminiimonas arsenicoxydans.